A 185-amino-acid polypeptide reads, in one-letter code: Elongation factor P (185 aa).

This sequence belongs to the elongation factor P family.

It is found in the cytoplasm. It functions in the pathway protein biosynthesis; polypeptide chain elongation. Its function is as follows. Involved in peptide bond synthesis. Stimulates efficient translation and peptide-bond synthesis on native or reconstituted 70S ribosomes in vitro. Probably functions indirectly by altering the affinity of the ribosome for aminoacyl-tRNA, thus increasing their reactivity as acceptors for peptidyl transferase. The polypeptide is Elongation factor P (Thermosynechococcus vestitus (strain NIES-2133 / IAM M-273 / BP-1)).